Here is a 95-residue protein sequence, read N- to C-terminus: Large ribosomal subunit protein uL23 (95 aa).

Belongs to the universal ribosomal protein uL23 family. In terms of assembly, part of the 50S ribosomal subunit. Contacts protein L29, and trigger factor when it is bound to the ribosome.

In terms of biological role, one of the early assembly proteins it binds 23S rRNA. One of the proteins that surrounds the polypeptide exit tunnel on the outside of the ribosome. Forms the main docking site for trigger factor binding to the ribosome. This Lawsonia intracellularis (strain PHE/MN1-00) protein is Large ribosomal subunit protein uL23.